A 655-amino-acid chain; its full sequence is Gastrulation defective protein 1 homolog (655 aa).

2 disordered regions span residues 1-54 (MQRG…EQMI) and 83-165 (AKVF…DEQS). Composition is skewed to basic and acidic residues over residues 23–36 (RSNE…KEST), 91–115 (QIEK…KEDD), and 134–146 (TDKE…SSKD). Residues 147–164 (EDSDDDDYSSDEDSDDEQ) are compositionally biased toward acidic residues. 7 WD repeats span residues 180–219 (HGSR…SSMR), 227–268 (CENH…ECCK), 281–321 (GHVA…EQLQ), 330–369 (GLRT…VNTT), 377–416 (QKGS…QPLH), 422–467 (FSRY…EVQR), and 470–510 (VSNA…RGAK). Disordered regions lie at residues 544-580 (KSRT…VASS) and 633-655 (AIFS…EADK). Composition is skewed to basic and acidic residues over residues 554 to 564 (KARMDPVKSQR) and 639 to 655 (LPAD…EADK).

This sequence belongs to the WD repeat GAD-1 family.

This is Gastrulation defective protein 1 homolog from Drosophila melanogaster (Fruit fly).